The sequence spans 334 residues: Aspartate carbamoyltransferase catalytic subunit (334 aa).

Carbamoyl phosphate is bound by residues arginine 71 and threonine 72. Lysine 99 provides a ligand contact to L-aspartate. Positions 121, 151, and 154 each coordinate carbamoyl phosphate. Residues arginine 184 and arginine 239 each coordinate L-aspartate. Positions 280 and 281 each coordinate carbamoyl phosphate.

This sequence belongs to the aspartate/ornithine carbamoyltransferase superfamily. ATCase family. In terms of assembly, heterododecamer (2C3:3R2) of six catalytic PyrB chains organized as two trimers (C3), and six regulatory PyrI chains organized as three dimers (R2).

The enzyme catalyses carbamoyl phosphate + L-aspartate = N-carbamoyl-L-aspartate + phosphate + H(+). It functions in the pathway pyrimidine metabolism; UMP biosynthesis via de novo pathway; (S)-dihydroorotate from bicarbonate: step 2/3. Its function is as follows. Catalyzes the condensation of carbamoyl phosphate and aspartate to form carbamoyl aspartate and inorganic phosphate, the committed step in the de novo pyrimidine nucleotide biosynthesis pathway. This chain is Aspartate carbamoyltransferase catalytic subunit, found in Pseudomonas fluorescens biotype A.